We begin with the raw amino-acid sequence, 212 residues long: Redox-sensing transcriptional repressor Rex (212 aa).

Positions 17 to 56 (KYHRYLQELMENDVDRISSKELSEKIGFTASQIRQDLNCF) form a DNA-binding region, H-T-H motif. Residue 91–96 (GAGNIG) coordinates NAD(+).

This sequence belongs to the transcriptional regulatory Rex family. In terms of assembly, homodimer.

It is found in the cytoplasm. In terms of biological role, modulates transcription in response to changes in cellular NADH/NAD(+) redox state. This Clostridium perfringens (strain ATCC 13124 / DSM 756 / JCM 1290 / NCIMB 6125 / NCTC 8237 / Type A) protein is Redox-sensing transcriptional repressor Rex.